We begin with the raw amino-acid sequence, 1017 residues long: Probable disease resistance protein RDL5 (1017 aa).

Positions Q25–K52 form a coiled coil. The NB-ARC domain occupies K147–Y460. An ATP-binding site is contributed by G190 to T197. 7 LRR repeats span residues L602–L627, M649–K674, L675–T699, P768–K791, L792–Q819, M841–S865, and M937–Y962.

This sequence belongs to the disease resistance NB-LRR family.

Its function is as follows. Potential disease resistance protein. The sequence is that of Probable disease resistance protein RDL5 (RDL5) from Arabidopsis thaliana (Mouse-ear cress).